We begin with the raw amino-acid sequence, 402 residues long: Acetate kinase (402 aa).

Asn7 contacts Mg(2+). Lys14 is an ATP binding site. Arg95 lines the substrate pocket. Asp152 functions as the Proton donor/acceptor in the catalytic mechanism. Residues 212–216 (HLGNG), 286–288 (DMR), and 334–338 (GIGEN) contribute to the ATP site. Residue Glu388 coordinates Mg(2+).

Belongs to the acetokinase family. As to quaternary structure, homodimer. Requires Mg(2+) as cofactor. Mn(2+) is required as a cofactor.

Its subcellular location is the cytoplasm. It catalyses the reaction acetate + ATP = acetyl phosphate + ADP. It functions in the pathway metabolic intermediate biosynthesis; acetyl-CoA biosynthesis; acetyl-CoA from acetate: step 1/2. Its function is as follows. Catalyzes the formation of acetyl phosphate from acetate and ATP. Can also catalyze the reverse reaction. This Oleidesulfovibrio alaskensis (strain ATCC BAA-1058 / DSM 17464 / G20) (Desulfovibrio alaskensis) protein is Acetate kinase.